Here is a 63-residue protein sequence, read N- to C-terminus: Small ribosomal subunit protein eS17 (63 aa).

Belongs to the eukaryotic ribosomal protein eS17 family.

The sequence is that of Small ribosomal subunit protein eS17 from Methanosphaerula palustris (strain ATCC BAA-1556 / DSM 19958 / E1-9c).